Consider the following 304-residue polypeptide: tRNA pseudouridine synthase B (304 aa).

Residue Asp48 is the Nucleophile of the active site.

It belongs to the pseudouridine synthase TruB family. Type 1 subfamily.

The enzyme catalyses uridine(55) in tRNA = pseudouridine(55) in tRNA. Its function is as follows. Responsible for synthesis of pseudouridine from uracil-55 in the psi GC loop of transfer RNAs. In Pseudomonas paraeruginosa (strain DSM 24068 / PA7) (Pseudomonas aeruginosa (strain PA7)), this protein is tRNA pseudouridine synthase B.